The sequence spans 435 residues: 3-phosphoshikimate 1-carboxyvinyltransferase (435 aa).

3 residues coordinate 3-phosphoshikimate: lysine 22, serine 23, and arginine 27. Lysine 22 is a binding site for phosphoenolpyruvate. Phosphoenolpyruvate is bound by residues glycine 95 and arginine 123. Positions 168, 170, 319, and 346 each coordinate 3-phosphoshikimate. Glutamine 170 is a binding site for phosphoenolpyruvate. The Proton acceptor role is filled by aspartate 319. Arginine 350 and arginine 393 together coordinate phosphoenolpyruvate.

It belongs to the EPSP synthase family. In terms of assembly, monomer.

Its subcellular location is the cytoplasm. The enzyme catalyses 3-phosphoshikimate + phosphoenolpyruvate = 5-O-(1-carboxyvinyl)-3-phosphoshikimate + phosphate. Its pathway is metabolic intermediate biosynthesis; chorismate biosynthesis; chorismate from D-erythrose 4-phosphate and phosphoenolpyruvate: step 6/7. Functionally, catalyzes the transfer of the enolpyruvyl moiety of phosphoenolpyruvate (PEP) to the 5-hydroxyl of shikimate-3-phosphate (S3P) to produce enolpyruvyl shikimate-3-phosphate and inorganic phosphate. The chain is 3-phosphoshikimate 1-carboxyvinyltransferase from Chloroflexus aggregans (strain MD-66 / DSM 9485).